The following is a 521-amino-acid chain: Vang-like protein 2 (521 aa).

Residues 1–81 are disordered; that stretch reads MDTESQYSGY…TTVVTGTSEH (81 aa). Topologically, residues 1-108 are cytoplasmic; the sequence is MDTESQYSGY…VPLDCSRHLG (108 aa). Residues 15–33 are compositionally biased toward basic residues; the sequence is GHSRSSRKHRDRRDRHRSK. The segment covering 57–67 has biased composition (basic and acidic residues); the sequence is ESTRGDERDDN. The span at 69–81 shows a compositional bias: low complexity; it reads GETTTVVTGTSEH. Residues 109–129 form a helical membrane-spanning segment; it reads VAAGAILALLSFLTPLAFLLL. The Extracellular segment spans residues 130 to 147; it reads PPLLWREELEPCGTACEG. The chain crosses the membrane as a helical span at residues 148 to 168; sequence LFISVAFKLLILLLGSWALFF. Over 169–178 the chain is Cytoplasmic; that stretch reads RRPKASLPRV. Residues 179 to 199 form a helical membrane-spanning segment; the sequence is FVLRALLMVLVFLLVISYWLF. Residues 200 to 217 lie on the Extracellular side of the membrane; the sequence is YGVRILDARERSYQGVVQ. A helical transmembrane segment spans residues 218–238; the sequence is FAVSLVDALLFVHYLAVVLLE. Residues 239 to 521 lie on the Cytoplasmic side of the membrane; that stretch reads LRQLQPQFTL…VMRLQSETSV (283 aa).

The protein belongs to the Vang family. In terms of assembly, homodimer and heterodimer with Vangl1. Interacts through its C-terminal region with the N-terminal half of DVL1, DVL2 and DVL3. The PDZ domain of DVL1, DVL2 and DVL3 is required for the interaction. Variants Glu-255 and Asn-464 impair interaction with the DVL proteins. Also interacts with the PDZ domains of MAGI3, SCRIB/SCRB1 and FZD3. Interacts with PRICKLE3. In terms of tissue distribution, primarily expressed in the brain and epididymis. Not detected in the cochlea of Lp mice.

It is found in the cell membrane. Functionally, involved in the control of early morphogenesis and patterning of both axial midline structures and the development of neural plate. Plays a role in the regulation of planar cell polarity, particularly in the orientation of stereociliary bundles in the cochlea. Required for polarization and movement of myocardializing cells in the outflow tract and seems to act via RHOA signaling to regulate this process. Required for cell surface localization of FZD3 and FZD6 in the inner ear. This chain is Vang-like protein 2 (Vangl2), found in Mus musculus (Mouse).